A 424-amino-acid chain; its full sequence is Imidazolonepropionase (424 aa).

Fe(3+) contacts are provided by His-84 and His-86. Positions 84 and 86 each coordinate Zn(2+). 3 residues coordinate 4-imidazolone-5-propanoate: Arg-93, Tyr-156, and His-189. Tyr-156 provides a ligand contact to N-formimidoyl-L-glutamate. His-254 is a Fe(3+) binding site. Zn(2+) is bound at residue His-254. 4-imidazolone-5-propanoate is bound at residue Glu-257. A Fe(3+)-binding site is contributed by Asp-328. Asp-328 contributes to the Zn(2+) binding site. The N-formimidoyl-L-glutamate site is built by Asn-330 and Gly-332. Position 333 (Ser-333) interacts with 4-imidazolone-5-propanoate.

This sequence belongs to the metallo-dependent hydrolases superfamily. HutI family. Zn(2+) serves as cofactor. Requires Fe(3+) as cofactor.

It is found in the cytoplasm. It carries out the reaction 4-imidazolone-5-propanoate + H2O = N-formimidoyl-L-glutamate. It functions in the pathway amino-acid degradation; L-histidine degradation into L-glutamate; N-formimidoyl-L-glutamate from L-histidine: step 3/3. Functionally, catalyzes the hydrolytic cleavage of the carbon-nitrogen bond in imidazolone-5-propanoate to yield N-formimidoyl-L-glutamate. It is the third step in the universal histidine degradation pathway. This chain is Imidazolonepropionase, found in Geobacillus sp. (strain WCH70).